Consider the following 131-residue polypeptide: Small ribosomal subunit protein uS8 (131 aa).

The protein belongs to the universal ribosomal protein uS8 family. Part of the 30S ribosomal subunit. Contacts proteins S5 and S12.

Its function is as follows. One of the primary rRNA binding proteins, it binds directly to 16S rRNA central domain where it helps coordinate assembly of the platform of the 30S subunit. In Bordetella petrii (strain ATCC BAA-461 / DSM 12804 / CCUG 43448), this protein is Small ribosomal subunit protein uS8.